A 164-amino-acid chain; its full sequence is Lipoprotein signal peptidase (164 aa).

2 consecutive transmembrane segments (helical) span residues 68 to 88 and 96 to 116; these read TILV…LWNA and FWGL…RAMF. Active-site residues include Asp-121 and Asp-139. Residues 134–154 form a helical membrane-spanning segment; sequence TFNVADSAIVVGSCLLLIDLL.

It belongs to the peptidase A8 family.

It localises to the cell inner membrane. The catalysed reaction is Release of signal peptides from bacterial membrane prolipoproteins. Hydrolyzes -Xaa-Yaa-Zaa-|-(S,diacylglyceryl)Cys-, in which Xaa is hydrophobic (preferably Leu), and Yaa (Ala or Ser) and Zaa (Gly or Ala) have small, neutral side chains.. The protein operates within protein modification; lipoprotein biosynthesis (signal peptide cleavage). Its function is as follows. This protein specifically catalyzes the removal of signal peptides from prolipoproteins. This chain is Lipoprotein signal peptidase, found in Solibacter usitatus (strain Ellin6076).